The sequence spans 288 residues: DegV domain-containing protein (288 aa).

Residues 3–282 (IAVMTDSTSY…SGGLGLGYVG (280 aa)) enclose the DegV domain. Positions 62 and 95 each coordinate hexadecanoate.

May bind long-chain fatty acids, such as palmitate, and may play a role in lipid transport or fatty acid metabolism. The protein is DegV domain-containing protein of Staphylococcus aureus.